A 125-amino-acid chain; its full sequence is Apolipoprotein C-IV (125 aa).

Positions 1–27 are cleaved as a signal peptide; it reads MSLLRHSLQALPALCLCVLVLACIGAC.

This sequence belongs to the apolipoprotein C4 family.

The protein localises to the secreted. Functionally, may participate in lipoprotein metabolism. This chain is Apolipoprotein C-IV (APOC4), found in Ateles geoffroyi (Black-handed spider monkey).